Consider the following 347-residue polypeptide: Epimerase family protein SDR39U1 homolog, chloroplastic (347 aa).

Residues 1–37 (MELLCSPTSLSSSFALSSALLVPRSFSMPGTRRFMVL) constitute a chloroplast transit peptide. Residues 54–57 (TGFI), 76–77 (TR), 115–119 (LAGLP), and arginine 136 each bind NADP(+).

Can form homodimers. As to expression, expressed in leaves, stems and flower buds.

Its subcellular location is the plastid. The protein resides in the chloroplast inner membrane. The protein localises to the chloroplast. In terms of biological role, putative NADP-dependent oxidoreductase that acts as a positive regulator of chloroplast division. May play a role at an early stage of the division process. The protein is Epimerase family protein SDR39U1 homolog, chloroplastic of Arabidopsis thaliana (Mouse-ear cress).